The following is a 426-amino-acid chain: Glutamate-1-semialdehyde 2,1-aminomutase (426 aa).

An N6-(pyridoxal phosphate)lysine modification is found at Lys265.

This sequence belongs to the class-III pyridoxal-phosphate-dependent aminotransferase family. HemL subfamily. As to quaternary structure, homodimer. Pyridoxal 5'-phosphate serves as cofactor.

The protein localises to the cytoplasm. The enzyme catalyses (S)-4-amino-5-oxopentanoate = 5-aminolevulinate. Its pathway is porphyrin-containing compound metabolism; protoporphyrin-IX biosynthesis; 5-aminolevulinate from L-glutamyl-tRNA(Glu): step 2/2. The polypeptide is Glutamate-1-semialdehyde 2,1-aminomutase (Klebsiella pneumoniae subsp. pneumoniae (strain ATCC 700721 / MGH 78578)).